A 316-amino-acid polypeptide reads, in one-letter code: D-alanine--D-alanine ligase (316 aa).

Residues 109 to 304 enclose the ATP-grasp domain; the sequence is KRLWRGMDLP…FDEMVLQILA (196 aa). 135–190 is a binding site for ATP; the sequence is AADLGLPLIVKPAREGSSLGMMKVESIEALQSAYREAVIFDTAVFAERWLPGAEYT. Mg(2+) is bound by residues Asp-258, Glu-271, and Asn-273.

The protein belongs to the D-alanine--D-alanine ligase family. Mg(2+) is required as a cofactor. Mn(2+) serves as cofactor.

The protein localises to the cytoplasm. It catalyses the reaction 2 D-alanine + ATP = D-alanyl-D-alanine + ADP + phosphate + H(+). Its pathway is cell wall biogenesis; peptidoglycan biosynthesis. Its function is as follows. Cell wall formation. The sequence is that of D-alanine--D-alanine ligase from Nitrosococcus oceani (strain ATCC 19707 / BCRC 17464 / JCM 30415 / NCIMB 11848 / C-107).